A 333-amino-acid chain; its full sequence is MLKGTFFCVDAHTCGNPVRLVTSGHPDLKGRTMSEKRQDFLAQYDWIRKALMFEPRGHDMMSGAFLYPPCSDNADAAILFIETSGCLPMCGHGTIGTITAALESGLLTPKMPGQLTIDVPAGQIKVQYQQTGAKVDWVKIFNVPAYLAHKDVVLDIPGLGPLKIDVSYGGNYYAIVDPQANFPGLRHWSAGDILRWSPIVREVAHRELNCVHPDDPTVNGVSHVLWTGDTISEGSNGANAVFYGDKAIDRSPCGTGTSARLAQLYSRGELKVGDEYTHESIIGSQFVGRIEAATKVGAFDAIMPSIKGWARITGHNAITVDDNDPYAFGFQVV.

The active-site Proton acceptor is Cys90. Substrate contacts are provided by residues 91 to 92 (GH), His223, and Asp249. Residue Cys253 is the Proton donor of the active site. 254–255 (GT) contacts substrate.

It belongs to the proline racemase family.

It carries out the reaction trans-4-hydroxy-L-proline = cis-4-hydroxy-D-proline. Its function is as follows. Catalyzes the epimerization of trans-4-hydroxy-L-proline (t4LHyp) to cis-4-hydroxy-D-proline (c4DHyp). Is likely involved in a degradation pathway that converts t4LHyp to alpha-ketoglutarate. Displays no proline racemase activity. The protein is 4-hydroxyproline 2-epimerase of Shewanella loihica (strain ATCC BAA-1088 / PV-4).